A 327-amino-acid polypeptide reads, in one-letter code: GTPase Obg (327 aa).

An Obg domain is found at 1–159 (MQFIDQANII…WEVQLELKLL (159 aa)). Residues 160–327 (AEVGIIGLPN…PLLSEVWKRI (168 aa)) form the OBG-type G domain. Residues 166–173 (GLPNAGKS), 191–195 (FTTLI), 213–216 (DIPG), 280–283 (NKME), and 309–311 (SSS) each bind ATP. Mg(2+)-binding residues include Ser173 and Thr193.

The protein belongs to the TRAFAC class OBG-HflX-like GTPase superfamily. OBG GTPase family. As to quaternary structure, monomer. Mg(2+) is required as a cofactor.

It is found in the cytoplasm. In terms of biological role, an essential GTPase which binds GTP, GDP and possibly (p)ppGpp with moderate affinity, with high nucleotide exchange rates and a fairly low GTP hydrolysis rate. Plays a role in control of the cell cycle, stress response, ribosome biogenesis and in those bacteria that undergo differentiation, in morphogenesis control. The sequence is that of GTPase Obg from Prochlorococcus marinus subsp. pastoris (strain CCMP1986 / NIES-2087 / MED4).